Here is a 500-residue protein sequence, read N- to C-terminus: Cytochrome P450 monooxygenase acrD (500 aa).

The helical transmembrane segment at 13-32 (PYLSGTNLVWTLLLVGYIIP) threads the bilayer. Residues Asn210 and Asn414 are each glycosylated (N-linked (GlcNAc...) asparagine). Position 447 (Cys447) interacts with heme.

This sequence belongs to the cytochrome P450 family. It depends on heme as a cofactor.

It is found in the membrane. It functions in the pathway secondary metabolite biosynthesis. Its function is as follows. Cytochrome P450 monooxygenase; part of the cluster that mediates the biosynthesis of acurin A, a highly reduced polyketide coupled to a serine via a peptide bond. The activities of the highly reducing polyketide synthase acrA and the nonribosomal peptide synthetase acrB are collectively responsible for the synthesis of the acurin A core structure with a heptaketide backbone produced by acrA covalently fused to a L-serine by acrB. After the formation of the PK-NRP hybrid product, it is detached from acrB by reductive release to set up the formation of the lactam ring by aldol condensation. The hydrolyase acrC then catalyzes water loss to generate a double bond in the ring. This double bond is probably reduced, which is followed by three oxidations at C-22 to generate the carboxylic acid moiety, involving probably the FAD-binding monooxygenase acrE and the cytochrome P450 monooxygenases acrD and acrF. Finally, a last methylation step performed by the O-methyltransferase acrG leads to the production of acurin A. The chain is Cytochrome P450 monooxygenase acrD from Aspergillus aculeatus (strain ATCC 16872 / CBS 172.66 / WB 5094).